The primary structure comprises 158 residues: RNA pyrophosphohydrolase (158 aa).

In terms of domain architecture, Nudix hydrolase spans 8 to 152 (PYRPCAGVML…KRALYRGLIE (145 aa)). The short motif at 42–63 (GGIDEGEDAEKAAIRELGEETG) is the Nudix box element.

Belongs to the Nudix hydrolase family. RppH subfamily. A divalent metal cation is required as a cofactor.

In terms of biological role, accelerates the degradation of transcripts by removing pyrophosphate from the 5'-end of triphosphorylated RNA, leading to a more labile monophosphorylated state that can stimulate subsequent ribonuclease cleavage. The polypeptide is RNA pyrophosphohydrolase (Sphingopyxis alaskensis (strain DSM 13593 / LMG 18877 / RB2256) (Sphingomonas alaskensis)).